The chain runs to 129 residues: GEL complex subunit OPTI (129 aa).

At Met-1–Val-44 the chain is on the cytoplasmic side. Residues Ile-45–Leu-65 traverse the membrane as a helical segment. Residue Arg-66 is a topological domain, lumenal. A helical membrane pass occupies residues Gly-67 to Leu-84. At Tyr-85–Leu-103 the chain is on the cytoplasmic side. Residues Thr-104–His-127 form a helical membrane-spanning segment. Over Tyr-128–Asp-129 the chain is Lumenal.

It belongs to the EMC6 family. Component of the GET- and EMC-like (GEL) complex, composed of RAB5IF/OPTI and TMCO1. The GEL complex is part of the multi-pass translocon (MPT) complex, composed of three subcomplexes, the GEL complex (composed of RAB5IF/OPTI and TMCO1), the BOS complex (composed of NCLN/Nicalin, NOMO1 and TMEM147) and the PAT complex (composed of WDR83OS/Asterix and CCDC47). The MPT complex associates with the SEC61 complex. Interacts with NDUFS3, NDUFA4, NDUFV1, NDUFA9 and NDUFS8 of the mitochondrial membrane respiratory chain NADH dehydrogenase (Complex I). Interacts with UQCRC2 of the ubiquinol-cytochrome c reductase complex (Complex III). Interacts with COX5A and COX7C of the cytochrome c oxidase complex (Complex IV).

The protein localises to the endoplasmic reticulum membrane. It localises to the mitochondrion inner membrane. In terms of biological role, component of the multi-pass translocon (MPT) complex that mediates insertion of multi-pass membrane proteins into the lipid bilayer of membranes. The MPT complex takes over after the SEC61 complex: following membrane insertion of the first few transmembrane segments of proteins by the SEC61 complex, the MPT complex occludes the lateral gate of the SEC61 complex to promote insertion of subsequent transmembrane regions. Within the MPT complex, the GEL subcomplex may mediate insertion of transmembrane regions into the membrane. In addition to its role in multi-pass membrane insertion, RAB5IF/OPTI also acts as an assembly factor for mitochondrial respiratory complexes. The sequence is that of GEL complex subunit OPTI (RAB5IF) from Canis lupus familiaris (Dog).